Reading from the N-terminus, the 387-residue chain is V-set and immunoglobulin domain-containing protein 1 (387 aa).

An N-terminal signal peptide occupies residues 1-21; sequence MVFAFWKVFLILSCLAGQVSV. The Ig-like V-type domain maps to 22–132; that stretch reads VQVTIPDGFV…DFLGQNQGIL (111 aa). The Extracellular portion of the chain corresponds to 22 to 232; the sequence is VQVTIPDGFV…EIDLTSSHPE (211 aa). Residues N32 and N38 are each glycosylated (N-linked (GlcNAc...) asparagine). A disulfide bond links C43 and C116. N-linked (GlcNAc...) asparagine glycosylation is found at N133, N200, and N219. Residues 140 to 227 enclose the Ig-like C2-type domain; it reads PSKPLCSVQG…GNSSCEIDLT (88 aa). An intrachain disulfide couples C161 to C211. The chain crosses the membrane as a helical span at residues 233–253; sequence VGIIVGALIGSLVGAAIIISV. The Cytoplasmic portion of the chain corresponds to 254–387; the sequence is VCFARNKAKA…SEDEKGVVKA (134 aa). Positions 266–387 are disordered; sequence KERNSKTIAE…SEDEKGVVKA (122 aa). A compositionally biased stretch (basic and acidic residues) spans 284–296; it reads PRGESEAMPREDA. Over residues 299-308 the composition is skewed to polar residues; that stretch reads LEVTLPSSIH. The span at 325–335 shows a compositional bias: pro residues; the sequence is TQEPAPEPAPG. The segment covering 344-368 has biased composition (acidic residues); the sequence is LDIELELEPETQSELEPEPEPEPES.

Post-translationally, highly N-glycosylated. Appears not to contain significant amounts of O-linked carbohydrates or sialic acid in its sugar moieties. In terms of tissue distribution, detected only in stomach mucosa and testis, and to a much lesser level in pancreas (at protein level). Detected in gastric cancers (31%), esophageal carcinomas (50%) and ovarian cancers (23%).

The protein resides in the membrane. This is V-set and immunoglobulin domain-containing protein 1 (VSIG1) from Homo sapiens (Human).